The chain runs to 292 residues: ATP synthase gamma chain (292 aa).

This sequence belongs to the ATPase gamma chain family. As to quaternary structure, F-type ATPases have 2 components, CF(1) - the catalytic core - and CF(0) - the membrane proton channel. CF(1) has five subunits: alpha(3), beta(3), gamma(1), delta(1), epsilon(1). CF(0) has three main subunits: a, b and c.

It is found in the cell inner membrane. Its function is as follows. Produces ATP from ADP in the presence of a proton gradient across the membrane. The gamma chain is believed to be important in regulating ATPase activity and the flow of protons through the CF(0) complex. The polypeptide is ATP synthase gamma chain (Methylobacterium sp. (strain 4-46)).